A 499-amino-acid chain; its full sequence is Lysine--tRNA ligase (499 aa).

Positions 407 and 414 each coordinate Mg(2+).

The protein belongs to the class-II aminoacyl-tRNA synthetase family. Homodimer. The cofactor is Mg(2+).

It localises to the cytoplasm. The catalysed reaction is tRNA(Lys) + L-lysine + ATP = L-lysyl-tRNA(Lys) + AMP + diphosphate. The chain is Lysine--tRNA ligase from Lactiplantibacillus plantarum (strain ATCC BAA-793 / NCIMB 8826 / WCFS1) (Lactobacillus plantarum).